The sequence spans 354 residues: UDP-N-acetylglucosamine--N-acetylmuramyl-(pentapeptide) pyrophosphoryl-undecaprenol N-acetylglucosamine transferase (354 aa).

UDP-N-acetyl-alpha-D-glucosamine is bound by residues 13–15, N125, S189, I242, 261–266, and Q286; these read SGG and ALTVSE.

The protein belongs to the glycosyltransferase 28 family. MurG subfamily.

The protein localises to the cell inner membrane. It carries out the reaction di-trans,octa-cis-undecaprenyl diphospho-N-acetyl-alpha-D-muramoyl-L-alanyl-D-glutamyl-meso-2,6-diaminopimeloyl-D-alanyl-D-alanine + UDP-N-acetyl-alpha-D-glucosamine = di-trans,octa-cis-undecaprenyl diphospho-[N-acetyl-alpha-D-glucosaminyl-(1-&gt;4)]-N-acetyl-alpha-D-muramoyl-L-alanyl-D-glutamyl-meso-2,6-diaminopimeloyl-D-alanyl-D-alanine + UDP + H(+). It participates in cell wall biogenesis; peptidoglycan biosynthesis. In terms of biological role, cell wall formation. Catalyzes the transfer of a GlcNAc subunit on undecaprenyl-pyrophosphoryl-MurNAc-pentapeptide (lipid intermediate I) to form undecaprenyl-pyrophosphoryl-MurNAc-(pentapeptide)GlcNAc (lipid intermediate II). This is UDP-N-acetylglucosamine--N-acetylmuramyl-(pentapeptide) pyrophosphoryl-undecaprenol N-acetylglucosamine transferase from Buchnera aphidicola subsp. Acyrthosiphon pisum (strain 5A).